The following is a 429-amino-acid chain: Enolase (429 aa).

Glutamine 163 is a (2R)-2-phosphoglycerate binding site. Glutamate 205 (proton donor) is an active-site residue. 3 residues coordinate Mg(2+): aspartate 242, glutamate 286, and aspartate 313. The (2R)-2-phosphoglycerate site is built by lysine 338, arginine 367, serine 368, and lysine 389. Catalysis depends on lysine 338, which acts as the Proton acceptor.

The protein belongs to the enolase family. Requires Mg(2+) as cofactor.

The protein localises to the cytoplasm. Its subcellular location is the secreted. It localises to the cell surface. The catalysed reaction is (2R)-2-phosphoglycerate = phosphoenolpyruvate + H2O. The protein operates within carbohydrate degradation; glycolysis; pyruvate from D-glyceraldehyde 3-phosphate: step 4/5. Functionally, catalyzes the reversible conversion of 2-phosphoglycerate (2-PG) into phosphoenolpyruvate (PEP). It is essential for the degradation of carbohydrates via glycolysis. This Geobacter metallireducens (strain ATCC 53774 / DSM 7210 / GS-15) protein is Enolase.